A 189-amino-acid chain; its full sequence is MNGLPATEAPGGAGCALAGLPPLPRGLSGLLNASGGSWRELERVYSQRSRIHDELSRAARAPDGPRHAAGSANSGSAAGPRRPVNLDSALAALRKEMVGLRQLDMSLLCQLWGLYESIQDYKHLCQDLSLCQDLSSSLHSDSSYPPDAGLSDDEEPPDASLPPDPPPLTVPQTHNARDQWLQDAFQISL.

A Phosphoserine modification is found at S28. A disordered region spans residues 54-82 (ELSRAARAPDGPRHAAGSANSGSAAGPRR). The segment covering 68 to 79 (AAGSANSGSAAG) has biased composition (low complexity). The LRR repeat unit spans residues 86-114 (LDSALAALRKEMVGLRQLDMSLLCQLWGL). Residues 136 to 175 (SSLHSDSSYPPDAGLSDDEEPPDASLPPDPPPLTVPQTHN) are disordered. Positions 159-169 (ASLPPDPPPLT) are enriched in pro residues. S188 bears the Phosphoserine mark.

This sequence belongs to the FAM89 family. Interacts with SKI. Interacts (via LRR repeat) with CDC42BPA (via AGC-kinase C-terminal domain), CDC42BPB (via AGC-kinase C-terminal domain) and LIMK1 (via LIM zinc-binding domains). Forms a tripartite complex with CDC42BPA, CDC42BPB and LIMK1. As to quaternary structure, (Microbial infection) Interacts with mouse mammary tumor virus (MMTV) envelope glycoprotein gp70. Widely expressed. Expressed in the early postnatal brain.

The protein resides in the cytoplasm. The protein localises to the cell projection. It is found in the lamellipodium. It localises to the cell surface. Negatively regulates TGF-beta-induced signaling; in cooperation with SKI prevents the translocation of SMAD2 from the nucleus to the cytoplasm in response to TGF-beta. Acts as an adapter that mediates the specific recognition of LIMK1 by CDC42BPA and CDC42BPB in the lamellipodia. LRAP25-mediated CDC42BPA/CDC42BPB targeting to LIMK1 and the lamellipodium results in LIMK1 activation and the subsequent phosphorylation of CFL1 which is important for lamellipodial F-actin regulation. Its function is as follows. (Microbial infection) May be a receptor for mouse mammary tumor virus (MMTV). The chain is Leucine repeat adapter protein 25 from Mus musculus (Mouse).